Consider the following 459-residue polypeptide: Trigger factor (459 aa).

Residues 166–245 (GDFANIDLTA…VNSVKAEELP (80 aa)) form the PPIase FKBP-type domain.

This sequence belongs to the FKBP-type PPIase family. Tig subfamily.

It localises to the cytoplasm. The catalysed reaction is [protein]-peptidylproline (omega=180) = [protein]-peptidylproline (omega=0). Involved in protein export. Acts as a chaperone by maintaining the newly synthesized protein in an open conformation. Functions as a peptidyl-prolyl cis-trans isomerase. The sequence is that of Trigger factor from Bifidobacterium longum (strain DJO10A).